Consider the following 157-residue polypeptide: Stalk-specific protein A (157 aa).

Positions 1–19 (MRSILILLSLLLTIAFASA) are cleaved as a signal peptide.

It localises to the secreted. This chain is Stalk-specific protein A (staA), found in Dictyostelium discoideum (Social amoeba).